We begin with the raw amino-acid sequence, 720 residues long: Phosphoribosylformylglycinamidine synthase subunit PurL (720 aa).

Residue histidine 47 is part of the active site. The ATP site is built by tyrosine 50 and lysine 89. Residue glutamate 91 participates in Mg(2+) binding. Substrate contacts are provided by residues 92–95 (SHNH) and arginine 114. Histidine 93 functions as the Proton acceptor in the catalytic mechanism. Position 115 (aspartate 115) interacts with Mg(2+). Position 238 (glutamine 238) interacts with substrate. Position 266 (aspartate 266) interacts with Mg(2+). 310–312 (ESQ) lines the substrate pocket. 2 residues coordinate ATP: aspartate 488 and glycine 525. Residue asparagine 526 participates in Mg(2+) binding. Substrate is bound at residue serine 528.

It belongs to the FGAMS family. Monomer. Part of the FGAM synthase complex composed of 1 PurL, 1 PurQ and 2 PurS subunits.

Its subcellular location is the cytoplasm. It carries out the reaction N(2)-formyl-N(1)-(5-phospho-beta-D-ribosyl)glycinamide + L-glutamine + ATP + H2O = 2-formamido-N(1)-(5-O-phospho-beta-D-ribosyl)acetamidine + L-glutamate + ADP + phosphate + H(+). It participates in purine metabolism; IMP biosynthesis via de novo pathway; 5-amino-1-(5-phospho-D-ribosyl)imidazole from N(2)-formyl-N(1)-(5-phospho-D-ribosyl)glycinamide: step 1/2. In terms of biological role, part of the phosphoribosylformylglycinamidine synthase complex involved in the purines biosynthetic pathway. Catalyzes the ATP-dependent conversion of formylglycinamide ribonucleotide (FGAR) and glutamine to yield formylglycinamidine ribonucleotide (FGAM) and glutamate. The FGAM synthase complex is composed of three subunits. PurQ produces an ammonia molecule by converting glutamine to glutamate. PurL transfers the ammonia molecule to FGAR to form FGAM in an ATP-dependent manner. PurS interacts with PurQ and PurL and is thought to assist in the transfer of the ammonia molecule from PurQ to PurL. This Cereibacter sphaeroides (strain ATCC 17023 / DSM 158 / JCM 6121 / CCUG 31486 / LMG 2827 / NBRC 12203 / NCIMB 8253 / ATH 2.4.1.) (Rhodobacter sphaeroides) protein is Phosphoribosylformylglycinamidine synthase subunit PurL.